We begin with the raw amino-acid sequence, 491 residues long: MKNKEIIINNYLNLENNYIKLPKKLFSEQNPSEVPSTNLVVFNESLASDLGLSEEFLQSDDGINFLSGNKILEDTIPIAQAYAGHQFGHFTMLGDGRAILLGELKSQNGERFDIQLKGSGRTPYSRGGDGKATLGAMLREYIISEGMHGLGIPTTRSLAVVSTGEDVIREEILKGAVLTRIAKSHIRVGTFQFISNYGTIEELKALADYTLNRHLKKAEYEGNPYIYLLNEVIKSQAKLISKWQLVGFVHGVMNTDNVTISGETIDYGPCAFMDVYDPDTVFSSIDINGRYAYGNQPKIGVWNLARFAETLLPLLDEDLESAVEIAQNSISKYSDLYNKYWYTGMRAKLGIFNEKEEDKELIQSLLTMMKRFKADYTNTFSNLTLGNLSDIDMFASKEFKMWYEVWKERLKSQNQSSEESKMLMEKSNPTIIPRNNRVEEALVAAIKDSDYSVMQSLLDVLKNPYDYSSINEYYSIVPKSTSCTYKTYCGT.

Positions 94, 96, 97, 117, 129, 130, 180, and 187 each coordinate ATP. Residue aspartate 256 is the Proton acceptor of the active site. Asparagine 257 and aspartate 266 together coordinate Mg(2+). An ATP-binding site is contributed by aspartate 266.

The protein belongs to the SELO family. Mg(2+) is required as a cofactor. It depends on Mn(2+) as a cofactor.

It catalyses the reaction L-seryl-[protein] + ATP = 3-O-(5'-adenylyl)-L-seryl-[protein] + diphosphate. The catalysed reaction is L-threonyl-[protein] + ATP = 3-O-(5'-adenylyl)-L-threonyl-[protein] + diphosphate. The enzyme catalyses L-tyrosyl-[protein] + ATP = O-(5'-adenylyl)-L-tyrosyl-[protein] + diphosphate. It carries out the reaction L-histidyl-[protein] + UTP = N(tele)-(5'-uridylyl)-L-histidyl-[protein] + diphosphate. It catalyses the reaction L-seryl-[protein] + UTP = O-(5'-uridylyl)-L-seryl-[protein] + diphosphate. The catalysed reaction is L-tyrosyl-[protein] + UTP = O-(5'-uridylyl)-L-tyrosyl-[protein] + diphosphate. Nucleotidyltransferase involved in the post-translational modification of proteins. It can catalyze the addition of adenosine monophosphate (AMP) or uridine monophosphate (UMP) to a protein, resulting in modifications known as AMPylation and UMPylation. In Clostridium botulinum (strain Alaska E43 / Type E3), this protein is Protein nucleotidyltransferase YdiU.